The primary structure comprises 613 residues: DNA mismatch repair protein MutL (613 aa).

The segment at 364 to 393 (EPAVARQPEAPRYSSGASAPRPTGANYPHA) is disordered.

Belongs to the DNA mismatch repair MutL/HexB family.

In terms of biological role, this protein is involved in the repair of mismatches in DNA. It is required for dam-dependent methyl-directed DNA mismatch repair. May act as a 'molecular matchmaker', a protein that promotes the formation of a stable complex between two or more DNA-binding proteins in an ATP-dependent manner without itself being part of a final effector complex. This is DNA mismatch repair protein MutL from Enterobacter sp. (strain 638).